Consider the following 255-residue polypeptide: Small ribosomal subunit protein uS2 (255 aa).

Residues 230-255 (QSSSGRDLGASSEVPVEPALEEAAEG) form a disordered region.

The protein belongs to the universal ribosomal protein uS2 family.

The sequence is that of Small ribosomal subunit protein uS2 from Rhizobium etli (strain CIAT 652).